We begin with the raw amino-acid sequence, 195 residues long: ATP synthase subunit b (195 aa).

The chain crosses the membrane as a helical span at residues 28–48 (IFPNVYVLIAHVISLIFLLLL).

This sequence belongs to the ATPase B chain family. F-type ATPases have 2 components, F(1) - the catalytic core - and F(0) - the membrane proton channel. F(1) has five subunits: alpha(3), beta(3), gamma(1), delta(1), epsilon(1). F(0) has three main subunits: a(1), b(2) and c(10-14). The alpha and beta chains form an alternating ring which encloses part of the gamma chain. F(1) is attached to F(0) by a central stalk formed by the gamma and epsilon chains, while a peripheral stalk is formed by the delta and b chains.

It is found in the cell membrane. In terms of biological role, f(1)F(0) ATP synthase produces ATP from ADP in the presence of a proton or sodium gradient. F-type ATPases consist of two structural domains, F(1) containing the extramembraneous catalytic core and F(0) containing the membrane proton channel, linked together by a central stalk and a peripheral stalk. During catalysis, ATP synthesis in the catalytic domain of F(1) is coupled via a rotary mechanism of the central stalk subunits to proton translocation. Component of the F(0) channel, it forms part of the peripheral stalk, linking F(1) to F(0). The sequence is that of ATP synthase subunit b from Malacoplasma penetrans (strain HF-2) (Mycoplasma penetrans).